The sequence spans 458 residues: Flavonol 3-O-glucosyltransferase F3GT2 (458 aa).

Histidine 20 acts as the Proton acceptor in catalysis. Histidine 20 contributes to the an anthocyanidin binding site. Aspartate 119 serves as the catalytic Charge relay. Threonine 141 lines the UDP-alpha-D-glucose pocket. Histidine 150 is a binding site for an anthocyanidin. Positions 333, 335, 350, 353, 354, 355, and 358 each coordinate UDP-alpha-D-glucose. Glycine 373 contacts an anthocyanidin. Positions 374 and 375 each coordinate UDP-alpha-D-glucose.

Belongs to the UDP-glycosyltransferase family. As to expression, expressed in ovaries.

It catalyses the reaction a flavonol + UDP-alpha-D-glucose = a flavonol 3-O-beta-D-glucoside + UDP + H(+). It functions in the pathway flavonoid metabolism. Catalyzes the glucosylation of quercetin. Preferentially uses UDP-glucose as sugar donor, but is also able to use UDP-gal and UDP-xyl. Is probably not required for the accumulation of anthocyanin in red-fleshed kiwifruit varieties. The sequence is that of Flavonol 3-O-glucosyltransferase F3GT2 from Actinidia chinensis var. chinensis (Chinese soft-hair kiwi).